Reading from the N-terminus, the 590-residue chain is UvrABC system protein C (590 aa).

The 84-residue stretch at 15 to 98 (AEPGVYQFVA…VKRHQPRYNV (84 aa)) folds into the GIY-YIG domain. Residues 207-242 (GALADPLRREMAAAAQAEAFERAANLRDRLAVVEGF) enclose the UVR domain.

It belongs to the UvrC family. In terms of assembly, interacts with UvrB in an incision complex.

Its subcellular location is the cytoplasm. In terms of biological role, the UvrABC repair system catalyzes the recognition and processing of DNA lesions. UvrC both incises the 5' and 3' sides of the lesion. The N-terminal half is responsible for the 3' incision and the C-terminal half is responsible for the 5' incision. The protein is UvrABC system protein C of Halobacterium salinarum (strain ATCC 29341 / DSM 671 / R1).